Reading from the N-terminus, the 712-residue chain is Transcriptional regulator GZF3 (712 aa).

Polar residues predominate over residues 1 to 13; that stretch reads MSMSDIQQRPQIP. Disordered stretches follow at residues 1–20, 27–135, 173–280, 377–533, and 596–712; these read MSMS…TAAV, NVNT…GPVC, SLKT…HHHL, DVSS…GNNF, and LNNN…KVKI. 2 stretches are compositionally biased toward low complexity: residues 27 to 84 and 107 to 131; these read NVNT…EQSS and PKTG…ISMS. Residues 135-159 form a GATA-type zinc finger; the sequence is CGNCQTQTTPLWRRDETGQVLCNAC. A compositionally biased stretch (low complexity) spans 186–199; sequence KQNGSNSQSSKSSG. Positions 213-223 are enriched in basic residues; sequence GKKSPKSKKKS. Positions 246–261 are enriched in polar residues; the sequence is ATSNNTPTFKSTTSQS. Residues 268–280 are compositionally biased toward basic residues; it reads NHHHQHHNHHHHL. The span at 379–414 shows a compositional bias: low complexity; sequence SSINGSSTSLSSSSASSSIFSSVAPSTSSSSSLSNG. Polar residues-rich tracts occupy residues 429–447 and 484–498; these read SKIS…TPLQ and QQSM…RSPI. Composition is skewed to low complexity over residues 499-532 and 596-616; these read NGNQ…NGNN and LNNN…QPQQ. Residues 545–598 adopt a coiled-coil conformation; that stretch reads TRISELELVNDLYRTRIMELEAMEQAARLRENSMKKRLDEVMNLQINYQNLLNN. Polar residues predominate over residues 631–667; that stretch reads DQGSQSISPNVSITGSTTITSPNSRSKIISETTPTHH.

It is found in the nucleus. Functionally, probable transcription factor involved in response to fluconazole, LiCl, and copper. This Candida albicans (strain SC5314 / ATCC MYA-2876) (Yeast) protein is Transcriptional regulator GZF3 (GZF3).